The sequence spans 229 residues: Peptidase E (229 aa).

Catalysis depends on charge relay system residues Ser120, Asp135, and His157.

This sequence belongs to the peptidase S51 family.

It is found in the cytoplasm. It catalyses the reaction Dipeptidase E catalyzes the hydrolysis of dipeptides Asp-|-Xaa. It does not act on peptides with N-terminal Glu, Asn or Gln, nor does it cleave isoaspartyl peptides.. In terms of biological role, hydrolyzes dipeptides containing N-terminal aspartate residues. May play a role in allowing the cell to use peptide aspartate to spare carbon otherwise required for the synthesis of the aspartate family of amino acids. The chain is Peptidase E from Salmonella arizonae (strain ATCC BAA-731 / CDC346-86 / RSK2980).